The primary structure comprises 173 residues: Mesogenin-1 (173 aa).

Polar residues predominate over residues 39-68 (ESYSLSQTPSPQSVSPAASYESTYSSSPHT). Disordered stretches follow at residues 39–69 (ESYSLSQTPSPQSVSPAASYESTYSSSPHTG) and 96–117 (TKKDHGHKTSMTTHRRRKASER). A compositionally biased stretch (basic residues) spans 99-114 (DHGHKTSMTTHRRRKA). Residues 109 to 163 (HRRRKASEREKLRMRAIAEALHTLRNNLPPMYSQGRQPLTKIQTLKCTINYISEL) form the bHLH domain.

It is found in the nucleus. Involved in specifying the paraxial, but not dorsal, mesoderm. May regulate the expression of T-box transcription factors required for mesoderm formation and differentiation, such as brachyury T, wnt8, vegt and eomes. This is Mesogenin-1 (msgn1) from Xenopus laevis (African clawed frog).